The sequence spans 393 residues: Rubredoxin-NAD(+) reductase (393 aa).

Residues 9-12, 33-34, Lys42, Val80, Glu162, Asp282, Val294, and Lys325 each bind FAD; these read SGMA and CA.

The protein belongs to the FAD-dependent oxidoreductase family. Homodimer. It depends on FAD as a cofactor.

It localises to the cytoplasm. The enzyme catalyses 2 reduced [rubredoxin] + NAD(+) + H(+) = 2 oxidized [rubredoxin] + NADH. It participates in hydrocarbon metabolism; alkane degradation. Involved in the hydrocarbon hydroxylating system, which transfers electrons from NADH to rubredoxin reductase and then through rubredoxin to alkane 1 monooxygenase. This chain is Rubredoxin-NAD(+) reductase (rubB), found in Acinetobacter baylyi (strain ATCC 33305 / BD413 / ADP1).